The following is a 417-amino-acid chain: Glutamyl-tRNA reductase (417 aa).

Residues Thr49–Arg52, Ser105, Glu110–Gln112, and Gln116 each bind substrate. Cys50 (nucleophile) is an active-site residue. Gly185 to Ile190 provides a ligand contact to NADP(+).

This sequence belongs to the glutamyl-tRNA reductase family. In terms of assembly, homodimer.

The enzyme catalyses (S)-4-amino-5-oxopentanoate + tRNA(Glu) + NADP(+) = L-glutamyl-tRNA(Glu) + NADPH + H(+). It participates in porphyrin-containing compound metabolism; protoporphyrin-IX biosynthesis; 5-aminolevulinate from L-glutamyl-tRNA(Glu): step 1/2. Catalyzes the NADPH-dependent reduction of glutamyl-tRNA(Glu) to glutamate 1-semialdehyde (GSA). The polypeptide is Glutamyl-tRNA reductase (Chromobacterium violaceum (strain ATCC 12472 / DSM 30191 / JCM 1249 / CCUG 213 / NBRC 12614 / NCIMB 9131 / NCTC 9757 / MK)).